Reading from the N-terminus, the 714-residue chain is Methyl-accepting chemotaxis protein TlpQ (714 aa).

The helical transmembrane segment at 12–32 threads the bilayer; sequence ITLLAGLCLLGVVALLVGLSV. The Cache domain occupies 50-290; it reads LDESARLRLE…LLGKNLAKAD (241 aa). Histamine is bound by residues glutamate 170, 208-210, and aspartate 239; that span reads YFD. The chain crosses the membrane as a helical span at residues 360-380; that stretch reads TWVELGLGLGAAVLGLLVLWL. In terms of domain architecture, HAMP spans 383 to 437; the sequence is RGVTRPILGVAHMLRDIASGEGDLTQRLPHTGRDELGELAGWFNRFLDKLQPIIR. In terms of domain architecture, Methyl-accepting transducer spans 442–678; that stretch reads SVRDARSTAD…EINRNVAAIR (237 aa).

This sequence belongs to the methyl-accepting chemotaxis (MCP) protein family. Homotetramer.

It is found in the cell membrane. Chemotactic-signal transducers respond to changes in the concentration of attractants and repellents in the environment, transduce a signal from the outside to the inside of the cell, and facilitate sensory adaptation through the variation of the level of methylation. TlpQ is a chemoreceptor that binds and mediates chemotaxis to histamine, a key biological signaling molecule. It binds histamine with high affinity, which permits responses to very low histamine concentrations. Chemotaxis to histamine may play a role in the virulence of P.aeruginosa by recruiting cells at the infection site and consequently modulating the expression of quorum-sensing-dependent virulence genes. TlpQ also binds and mediates chemotaxis to polyamines such as putrescine, spermidine, cadaverine, agmatine and ethylenediamine. In addition, binds the quorum-sensing signal autoinducer 2 (AI-2), thus inducing chemotaxis toward AI-2 and biofilm formation. The sequence is that of Methyl-accepting chemotaxis protein TlpQ from Pseudomonas aeruginosa (strain ATCC 15692 / DSM 22644 / CIP 104116 / JCM 14847 / LMG 12228 / 1C / PRS 101 / PAO1).